A 273-amino-acid chain; its full sequence is Dermonecrotic toxin LhSicTox-alphaIA1iv (273 aa).

Histidine 5 is an active-site residue. Mg(2+) is bound by residues glutamate 25 and aspartate 27. The Nucleophile role is filled by histidine 41. 2 disulfides stabilise this stretch: cysteine 45-cysteine 51 and cysteine 47-cysteine 190. Aspartate 85 provides a ligand contact to Mg(2+).

This sequence belongs to the arthropod phospholipase D family. Class II subfamily. It depends on Mg(2+) as a cofactor. In terms of tissue distribution, expressed by the venom gland.

The protein localises to the secreted. The catalysed reaction is an N-(acyl)-sphingosylphosphocholine = an N-(acyl)-sphingosyl-1,3-cyclic phosphate + choline. The enzyme catalyses an N-(acyl)-sphingosylphosphoethanolamine = an N-(acyl)-sphingosyl-1,3-cyclic phosphate + ethanolamine. It carries out the reaction a 1-acyl-sn-glycero-3-phosphocholine = a 1-acyl-sn-glycero-2,3-cyclic phosphate + choline. It catalyses the reaction a 1-acyl-sn-glycero-3-phosphoethanolamine = a 1-acyl-sn-glycero-2,3-cyclic phosphate + ethanolamine. In terms of biological role, dermonecrotic toxins cleave the phosphodiester linkage between the phosphate and headgroup of certain phospholipids (sphingolipid and lysolipid substrates), forming an alcohol (often choline) and a cyclic phosphate. This toxin acts on sphingomyelin (SM). It may also act on ceramide phosphoethanolamine (CPE), lysophosphatidylcholine (LPC) and lysophosphatidylethanolamine (LPE), but not on lysophosphatidylserine (LPS), and lysophosphatidylglycerol (LPG). It acts by transphosphatidylation, releasing exclusively cyclic phosphate products as second products. Induces dermonecrosis, hemolysis, increased vascular permeability, edema, inflammatory response, and platelet aggregation. The sequence is that of Dermonecrotic toxin LhSicTox-alphaIA1iv from Loxosceles hirsuta (Recluse spider).